The primary structure comprises 428 residues: Kynureninase (428 aa).

Pyridoxal 5'-phosphate is bound by residues threonine 104, threonine 105, 132 to 135 (FPSD), aspartate 213, histidine 216, and tyrosine 238. An N6-(pyridoxal phosphate)lysine modification is found at lysine 239. The pyridoxal 5'-phosphate site is built by tryptophan 267 and threonine 295.

The protein belongs to the kynureninase family. As to quaternary structure, homodimer. Pyridoxal 5'-phosphate is required as a cofactor.

It catalyses the reaction L-kynurenine + H2O = anthranilate + L-alanine + H(+). The catalysed reaction is 3-hydroxy-L-kynurenine + H2O = 3-hydroxyanthranilate + L-alanine + H(+). It functions in the pathway amino-acid degradation; L-kynurenine degradation; L-alanine and anthranilate from L-kynurenine: step 1/1. It participates in cofactor biosynthesis; NAD(+) biosynthesis; quinolinate from L-kynurenine: step 2/3. In terms of biological role, catalyzes the cleavage of L-kynurenine (L-Kyn) and L-3-hydroxykynurenine (L-3OHKyn) into anthranilic acid (AA) and 3-hydroxyanthranilic acid (3-OHAA), respectively. The sequence is that of Kynureninase from Bacillus thuringiensis subsp. konkukian (strain 97-27).